Reading from the N-terminus, the 175-residue chain is Interferon gamma (175 aa).

Positions 1-23 are cleaved as a signal peptide; sequence MNATCCILALLLCLTQAISGCYC. Residue Gln24 is modified to Pyrrolidone carboxylic acid. Residues Asn39 and Asn106 are each glycosylated (N-linked (GlcNAc...) asparagine).

It belongs to the type II (or gamma) interferon family. In terms of assembly, homodimer. Interacts with IFNGR1 (via extracellular domain); this interaction promotes IFNGR1 dimerization. In terms of tissue distribution, released primarily from activated T lymphocytes.

It is found in the secreted. In terms of biological role, type II interferon produced by immune cells such as T-cells and NK cells that plays crucial roles in antimicrobial, antiviral, and antitumor responses by activating effector immune cells and enhancing antigen presentation. Primarily signals through the JAK-STAT pathway after interaction with its receptor IFNGR1 to affect gene regulation. Upon IFNG binding, IFNGR1 intracellular domain opens out to allow association of downstream signaling components JAK2, JAK1 and STAT1, leading to STAT1 activation, nuclear translocation and transcription of IFNG-regulated genes. Many of the induced genes are transcription factors such as IRF1 that are able to further drive regulation of a next wave of transcription. Plays a role in class I antigen presentation pathway by inducing a replacement of catalytic proteasome subunits with immunoproteasome subunits. In turn, increases the quantity, quality, and repertoire of peptides for class I MHC loading. Increases the efficiency of peptide generation also by inducing the expression of activator PA28 that associates with the proteasome and alters its proteolytic cleavage preference. Up-regulates as well MHC II complexes on the cell surface by promoting expression of several key molecules such as cathepsins B/CTSB, H/CTSH, and L/CTSL. Participates in the regulation of hematopoietic stem cells during development and under homeostatic conditions by affecting their development, quiescence, and differentiation. In Peromyscus maniculatus (North American deer mouse), this protein is Interferon gamma (IFNG).